The sequence spans 203 residues: uncharacterized protein (203 aa).

An N-terminal signal peptide occupies residues 1–20 (MDELILPILILLFLVFVAYF).

This is an uncharacterized protein from Pasteurella multocida (strain Pm70).